We begin with the raw amino-acid sequence, 276 residues long: 4-deoxy-L-threo-5-hexosulose-uronate ketol-isomerase 2 (276 aa).

Residues His194, His196, Glu201, and His243 each coordinate Zn(2+).

Belongs to the KduI family. The cofactor is Zn(2+).

It carries out the reaction 5-dehydro-4-deoxy-D-glucuronate = 3-deoxy-D-glycero-2,5-hexodiulosonate. Its pathway is glycan metabolism; pectin degradation; 2-dehydro-3-deoxy-D-gluconate from pectin: step 4/5. Its function is as follows. Catalyzes the isomerization of 5-dehydro-4-deoxy-D-glucuronate to 3-deoxy-D-glycero-2,5-hexodiulosonate. This is 4-deoxy-L-threo-5-hexosulose-uronate ketol-isomerase 2 (kduI2) from Enterococcus faecalis (strain ATCC 700802 / V583).